The chain runs to 127 residues: uncharacterized protein (127 aa).

This is an uncharacterized protein from Thermoproteus tenax (TTV1).